A 192-amino-acid chain; its full sequence is Flavin prenyltransferase UbiX (192 aa).

FMN-binding positions include 10-12 (GAS), Ser36, 92-95 (SVAT), and Arg127. Positions 157 and 173 each coordinate dimethylallyl phosphate.

The protein belongs to the UbiX/PAD1 family.

The catalysed reaction is dimethylallyl phosphate + FMNH2 = prenylated FMNH2 + phosphate. Functionally, flavin prenyltransferase that catalyzes the synthesis of the prenylated FMN cofactor (prenyl-FMN) for 4-hydroxy-3-polyprenylbenzoic acid decarboxylase UbiD. The prenyltransferase is metal-independent and links a dimethylallyl moiety from dimethylallyl monophosphate (DMAP) to the flavin N5 and C6 atoms of FMN. This Chlamydia muridarum (strain MoPn / Nigg) protein is Flavin prenyltransferase UbiX.